The following is a 296-amino-acid chain: Acetylglutamate kinase (296 aa).

Residues 65–66 (GG), arginine 87, and asparagine 190 contribute to the substrate site.

The protein belongs to the acetylglutamate kinase family. ArgB subfamily.

Its subcellular location is the cytoplasm. The catalysed reaction is N-acetyl-L-glutamate + ATP = N-acetyl-L-glutamyl 5-phosphate + ADP. It participates in amino-acid biosynthesis; L-arginine biosynthesis; N(2)-acetyl-L-ornithine from L-glutamate: step 2/4. In terms of biological role, catalyzes the ATP-dependent phosphorylation of N-acetyl-L-glutamate. This Moorella thermoacetica (strain ATCC 39073 / JCM 9320) protein is Acetylglutamate kinase.